A 142-amino-acid polypeptide reads, in one-letter code: Ig heavy chain V region IR2 (142 aa).

The signal sequence occupies residues 1 to 19; it reads MDLRLTYVFIVAILKGVLC. One can recognise an Ig-like domain in the interval 20–133; the sequence is EVKLEESGGG…YSENWFVYWG (114 aa).

This Rattus norvegicus (Rat) protein is Ig heavy chain V region IR2.